The sequence spans 150 residues: Large ribosomal subunit protein bL9 (150 aa).

The protein belongs to the bacterial ribosomal protein bL9 family.

Its function is as follows. Binds to the 23S rRNA. The chain is Large ribosomal subunit protein bL9 from Streptococcus gordonii (strain Challis / ATCC 35105 / BCRC 15272 / CH1 / DL1 / V288).